A 907-amino-acid polypeptide reads, in one-letter code: CRM-domain containing factor CFM3B, chloroplastic (907 aa).

The transit peptide at 1-59 directs the protein to the chloroplast; that stretch reads MAINSSHHFCPMTTTTTTSAKFVDSLGSSFCKFHGTSSSISLRSYRFGFSFMKNVKRLS. Disordered stretches follow at residues 62–89 and 101–123; these read GSSS…SKVV and LGVI…GSSS. Residues 70–84 show a composition bias toward polar residues; it reads RNENWNRTQKQNQFR. CRM domains lie at 220-316 and 421-518; these read MTLS…DGSG and STLG…EVGE. Residues 621–654 adopt a coiled-coil conformation; the sequence is SAKLVRKLERKLAFAEKKLLKAERALAKVEESLK. The region spanning 663–763 is the CRM 3 domain; the sequence is EGITEEERFM…KDYKRPTTLR (101 aa). A disordered region spans residues 824–907; sequence MAYSSDEETE…LQNEELDVQP (84 aa). 2 stretches are compositionally biased toward acidic residues: residues 828–857 and 868–881; these read SDEE…DEEG and TDVE…DTDF. A compositionally biased stretch (polar residues) spans 882–897; it reads GDNSASSTTPETTFVE.

Interacts with RNA. Part of large ribonucleo-protein particles that contain CAF1 and/or CAF2, and RNC1. Interacts with RFC3 in plastids. Expressed at low levels in roots and shoots.

Its subcellular location is the plastid. The protein localises to the chloroplast. Its function is as follows. Binds specific group II introns in chloroplasts and facilitates their splicing. Exhibits non-specific action during plastid rRNA biogenesis; RFC3 prevents unaccurate splicing to improve the accuracy of plastid rRNA processing. Acts on subgroup IIB introns. The substrates of the subgroup IIB also require the CRM domain proteins CAF1 or CAF2, with a simultaneous binding of CFM3B and CAF1 or CAF2. Required for seed development. The polypeptide is CRM-domain containing factor CFM3B, chloroplastic (Arabidopsis thaliana (Mouse-ear cress)).